Reading from the N-terminus, the 1177-residue chain is uncharacterized protein (1177 aa).

An N-terminal signal peptide occupies residues M1–A26. C27 carries the N-palmitoyl cysteine lipid modification. A lipid anchor (S-diacylglycerol cysteine) is attached at C27.

This sequence belongs to the MG307/MG309/MG338 family.

Its subcellular location is the cell membrane. This is an uncharacterized protein from Mycoplasma genitalium (strain ATCC 33530 / DSM 19775 / NCTC 10195 / G37) (Mycoplasmoides genitalium).